The sequence spans 360 residues: Protein phosphatase 1L (360 aa).

Residues 1 to 25 (MIEDTMTLLSLLGRIMRYFLLRPET) are Extracellular-facing. Residues 26–42 (LFLLCISLALWSYFFHT) traverse the membrane as a helical segment. Residues 43 to 360 (DEVKTIVKSS…FRNSSKTEEQ (318 aa)) lie on the Cytoplasmic side of the membrane. The PPM-type phosphatase domain maps to 92-351 (NVAVYSIQGR…DNITVMVVKF (260 aa)). Residues Asp-128, Gly-129, Asp-302, and Asp-342 each coordinate Mn(2+).

It belongs to the PP2C family. In terms of assembly, interacts with MAP3K7/TAK1. Interacts with MAP3K5. Mg(2+) is required as a cofactor. It depends on Mn(2+) as a cofactor. In terms of tissue distribution, ubiquitous. Highly expressed in heart, placenta, lung, liver, kidney and pancreas.

It is found in the membrane. It carries out the reaction O-phospho-L-seryl-[protein] + H2O = L-seryl-[protein] + phosphate. The catalysed reaction is O-phospho-L-threonyl-[protein] + H2O = L-threonyl-[protein] + phosphate. Its function is as follows. Acts as a suppressor of the SAPK signaling pathways by associating with and dephosphorylating MAP3K7/TAK1 and MAP3K5, and by attenuating the association between MAP3K7/TAK1 and MAP2K4 or MAP2K6. The polypeptide is Protein phosphatase 1L (PPM1L) (Homo sapiens (Human)).